Consider the following 653-residue polypeptide: TRAF3-interacting protein 1 (653 aa).

The segment at 1–306 (MNAAVVRRTQ…ADKSEKKADI (306 aa)) is abolishes microtubules binding when missing. Residues 134 to 467 (GDSRGRVLRT…DSQNSDNEDD (334 aa)) form a disordered region. 3 stretches are compositionally biased toward basic and acidic residues: residues 145–305 (KAQE…KKAD), 325–335 (NSLEGRKEDNI), and 370–384 (ENAEPEPAVKQKGDS). Positions 229-653 (RAKQDRDRNN…VHSINLSSRR (425 aa)) are DISC1-interaction domain. The residue at position 437 (serine 437) is a Phosphoserine. Residues 448–462 (SGKTVSTVIIDSQNS) are compositionally biased toward polar residues. Residues 533-628 (AWKKEKDIVS…IKDQQDKICA (96 aa)) are a coiled coil.

It belongs to the TRAF3IP1 family. As to quaternary structure, component of the IFT complex B, at least composed of IFT20, IFT22, IFT25, IFT27, IFT46, IFT52, TRAF3IP1/IFT54, IFT57, IFT74, IFT80, IFT81, and IFT88. Interacts with IFT88. Interacts with IL13RA1. Binds to microtubules, TRAF3 and DISC1. Interacts with MAP4.

The protein localises to the cytoplasm. It localises to the cytoskeleton. The protein resides in the cell projection. Its subcellular location is the cilium. It is found in the cilium axoneme. The protein localises to the cilium basal body. Plays an inhibitory role on IL13 signaling by binding to IL13RA1. Involved in suppression of IL13-induced STAT6 phosphorylation, transcriptional activity and DNA-binding. Recruits TRAF3 and DISC1 to the microtubules. Involved in kidney development and epithelial morphogenesis. Involved in the regulation of microtubule cytoskeleton organization. Is a negative regulator of microtubule stability, acting through the control of MAP4 levels. Involved in ciliogenesis. This chain is TRAF3-interacting protein 1 (Traf3ip1), found in Rattus norvegicus (Rat).